Here is a 506-residue protein sequence, read N- to C-terminus: Galactose/methyl galactoside import ATP-binding protein MglA (506 aa).

2 ABC transporter domains span residues 14–249 (LEMK…VGRS) and 264–506 (VMLE…SLYL). ATP is bound at residue 46–53 (GENGAGKS).

It belongs to the ABC transporter superfamily. Galactose/methyl galactoside importer (TC 3.A.1.2.3) family. As to quaternary structure, the complex is composed of one ATP-binding protein (MglA), two transmembrane proteins (MglC) and a solute-binding protein (MglB).

The protein resides in the cell inner membrane. The catalysed reaction is D-galactose(out) + ATP + H2O = D-galactose(in) + ADP + phosphate + H(+). It catalyses the reaction methyl beta-D-galactoside(out) + ATP + H2O = methyl beta-D-galactoside(in) + ADP + phosphate + H(+). Its function is as follows. Part of the ABC transporter complex MglABC involved in galactose/methyl galactoside import. Responsible for energy coupling to the transport system. The sequence is that of Galactose/methyl galactoside import ATP-binding protein MglA from Sodalis glossinidius (strain morsitans).